A 313-amino-acid chain; its full sequence is Methionyl-tRNA formyltransferase (313 aa).

(6S)-5,6,7,8-tetrahydrofolate is bound at residue 113-116 (SLLP).

The protein belongs to the Fmt family.

It catalyses the reaction L-methionyl-tRNA(fMet) + (6R)-10-formyltetrahydrofolate = N-formyl-L-methionyl-tRNA(fMet) + (6S)-5,6,7,8-tetrahydrofolate + H(+). Its function is as follows. Attaches a formyl group to the free amino group of methionyl-tRNA(fMet). The formyl group appears to play a dual role in the initiator identity of N-formylmethionyl-tRNA by promoting its recognition by IF2 and preventing the misappropriation of this tRNA by the elongation apparatus. This Francisella tularensis subsp. holarctica (strain FTNF002-00 / FTA) protein is Methionyl-tRNA formyltransferase.